The primary structure comprises 328 residues: Phosphate acyltransferase (328 aa).

It belongs to the PlsX family. Homodimer. Probably interacts with PlsY.

The protein resides in the cytoplasm. It catalyses the reaction a fatty acyl-[ACP] + phosphate = an acyl phosphate + holo-[ACP]. Its pathway is lipid metabolism; phospholipid metabolism. In terms of biological role, catalyzes the reversible formation of acyl-phosphate (acyl-PO(4)) from acyl-[acyl-carrier-protein] (acyl-ACP). This enzyme utilizes acyl-ACP as fatty acyl donor, but not acyl-CoA. This is Phosphate acyltransferase from Pseudothermotoga lettingae (strain ATCC BAA-301 / DSM 14385 / NBRC 107922 / TMO) (Thermotoga lettingae).